We begin with the raw amino-acid sequence, 247 residues long: uncharacterized protein (247 aa).

The N-acetyltransferase domain occupies 70–205; sequence ISLWMGPGNN…QKVPLEIMIR (136 aa).

The protein belongs to the acetyltransferase family.

It is found in the endoplasmic reticulum. It localises to the golgi apparatus. The protein resides in the vacuole. This is an uncharacterized protein from Schizosaccharomyces pombe (strain 972 / ATCC 24843) (Fission yeast).